We begin with the raw amino-acid sequence, 115 residues long: UPF0597 protein HI_0855 (115 aa).

Belongs to the UPF0597 family.

This chain is UPF0597 protein HI_0855, found in Haemophilus influenzae (strain ATCC 51907 / DSM 11121 / KW20 / Rd).